Consider the following 289-residue polypeptide: Diaminopimelate epimerase (289 aa).

3 residues coordinate substrate: N13, Q47, and N67. Residue C76 is the Proton donor of the active site. Residues 77 to 78 (GN), N167, N200, and 218 to 219 (ER) each bind substrate. The active-site Proton acceptor is the C227. 228–229 (GT) provides a ligand contact to substrate.

It belongs to the diaminopimelate epimerase family. Homodimer.

It localises to the cytoplasm. The catalysed reaction is (2S,6S)-2,6-diaminopimelate = meso-2,6-diaminopimelate. Its pathway is amino-acid biosynthesis; L-lysine biosynthesis via DAP pathway; DL-2,6-diaminopimelate from LL-2,6-diaminopimelate: step 1/1. In terms of biological role, catalyzes the stereoinversion of LL-2,6-diaminopimelate (L,L-DAP) to meso-diaminopimelate (meso-DAP), a precursor of L-lysine and an essential component of the bacterial peptidoglycan. The chain is Diaminopimelate epimerase from Burkholderia thailandensis (strain ATCC 700388 / DSM 13276 / CCUG 48851 / CIP 106301 / E264).